A 298-amino-acid chain; its full sequence is MSNAREIRSKVQSVKNTQKITGAMELVAASKMRGAIVKMNNVRPYVESANTIIKNVTAASIDYPNPYLFDRDVKRVGYIVTSTDRGLCGGLNINLFKHVLKEIKNNIEDRVGFDVCVIGSKAENFFAKLKDVNIVATAHYNDKDKEGSIRAIGGAVKVMLDKFTAGEIDRLYMSSNQFVSTIKQRPRLQTLLPIQDIFSAEEIKANKEKATKGHWDYIYERDIEEVLNALCIRYIEAQVRGAILENAACEQAARMMAMKNATDNASDIIDQLKLDYNKVRQAMITQELAEICSGAAAV.

The protein belongs to the ATPase gamma chain family. F-type ATPases have 2 components, CF(1) - the catalytic core - and CF(0) - the membrane proton channel. CF(1) has five subunits: alpha(3), beta(3), gamma(1), delta(1), epsilon(1). CF(0) has three main subunits: a, b and c.

Its subcellular location is the cell inner membrane. Its function is as follows. Produces ATP from ADP in the presence of a proton gradient across the membrane. The gamma chain is believed to be important in regulating ATPase activity and the flow of protons through the CF(0) complex. The sequence is that of ATP synthase gamma chain from Francisella tularensis subsp. holarctica (strain LVS).